A 138-amino-acid polypeptide reads, in one-letter code: 6,7-dimethyl-8-ribityllumazine synthase (138 aa).

5-amino-6-(D-ribitylamino)uracil contacts are provided by residues Phe13, 45-47 (VFD), and 69-71 (AVI). A (2S)-2-hydroxy-3-oxobutyl phosphate-binding site is contributed by 74–75 (AT). The active-site Proton donor is His77. Leu102 provides a ligand contact to 5-amino-6-(D-ribitylamino)uracil. Residue Arg117 coordinates (2S)-2-hydroxy-3-oxobutyl phosphate.

Belongs to the DMRL synthase family.

The enzyme catalyses (2S)-2-hydroxy-3-oxobutyl phosphate + 5-amino-6-(D-ribitylamino)uracil = 6,7-dimethyl-8-(1-D-ribityl)lumazine + phosphate + 2 H2O + H(+). It participates in cofactor biosynthesis; riboflavin biosynthesis; riboflavin from 2-hydroxy-3-oxobutyl phosphate and 5-amino-6-(D-ribitylamino)uracil: step 1/2. Its function is as follows. Catalyzes the formation of 6,7-dimethyl-8-ribityllumazine by condensation of 5-amino-6-(D-ribitylamino)uracil with 3,4-dihydroxy-2-butanone 4-phosphate. This is the penultimate step in the biosynthesis of riboflavin. In Methanobrevibacter smithii (strain ATCC 35061 / DSM 861 / OCM 144 / PS), this protein is 6,7-dimethyl-8-ribityllumazine synthase.